A 526-amino-acid chain; its full sequence is Thymocyte selection-associated high mobility group box protein TOX (526 aa).

Disordered regions lie at residues Met-138–Gln-178 and Gly-192–Pro-264. Over residues Gly-192–Asn-203 the composition is skewed to polar residues. The span at Gly-209 to Ser-220 shows a compositional bias: low complexity. Residues Asp-228–Lys-245 show a composition bias toward basic and acidic residues. The short motif at Lys-237 to Lys-256 is the Nuclear localization signal element. The segment covering Lys-246–Lys-256 has biased composition (basic residues). Positions Pro-261–Arg-329 form a DNA-binding region, HMG box.

The protein belongs to the high motility group (HMG) box superfamily. Interacts with HBO1 complex composed at least of KAT7/HBO1, ING4, MEAF6, and JADE2; this complex is involved in histone acetylation. Interacts with DNMT1, LEO1, PAF1, SAP130 and SIN3A; these interactors regulate chromatin remodeling. Interacts with an array of proteins involved in RNA processing and translation and DNA replication. Expressed in NK cells. Highly expressed in tumor-infiltrating CD8-positive T cells (at protein level).

It is found in the nucleus. Transcriptional regulator with a major role in neural stem cell commitment and corticogenesis as well as in lymphoid cell development and lymphoid tissue organogenesis. Binds to GC-rich DNA sequences in the proximity of transcription start sites and may alter chromatin structure, modifying access of transcription factors to DNA. During cortical development, controls the neural stem cell pool by inhibiting the switch from proliferative to differentiating progenitors. Beyond progenitor cells, promotes neurite outgrowth in newborn neurons migrating to reach the cortical plate. May activate or repress critical genes for neural stem cell fate such as SOX2, EOMES and ROBO2. Plays an essential role in the development of lymphoid tissue-inducer (LTi) cells, a subset necessary for the formation of secondary lymphoid organs: peripheral lymph nodes and Peyer's patches. Acts as a developmental checkpoint and regulates thymocyte positive selection toward T cell lineage commitment. Required for the development of various T cell subsets, including CD4-positive helper T cells, CD8-positive cytotoxic T cells, regulatory T cells and CD1D-dependent natural killer T (NKT) cells. Required for the differentiation of common lymphoid progenitors (CMP) to innate lymphoid cells (ILC). May regulate the NOTCH-mediated gene program, promoting differentiation of the ILC lineage. Required at the progenitor phase of NK cell development in the bone marrow to specify NK cell lineage commitment. Upon chronic antigen stimulation, diverts T cell development by promoting the generation of exhaustive T cells, while suppressing effector and memory T cell programming. May regulate the expression of genes encoding inhibitory receptors such as PDCD1 and induce the exhaustion program, to prevent the overstimulation of T cells and activation-induced cell death. This Homo sapiens (Human) protein is Thymocyte selection-associated high mobility group box protein TOX.